The primary structure comprises 854 residues: ATP-dependent zinc metalloprotease FtsH (854 aa).

Residues 1–5 (MNRKT) lie on the Cytoplasmic side of the membrane. The chain crosses the membrane as a helical span at residues 6 to 26 (VFRNVLLVAVVLLVIYAFSYF). Over 27–112 (SNDTRDFKTV…FNTTVTQESW (86 aa)) the chain is Extracellular. The chain crosses the membrane as a helical span at residues 113–133 (LTSILLFVLPMIILFGIFFFV). Residues 134 to 854 (MNRMQGGGGR…ARWDGPDGSR (721 aa)) lie on the Cytoplasmic side of the membrane. Position 207-214 (207-214 (GPPGTGKT)) interacts with ATP. Zn(2+) is bound at residue His429. Glu430 is a catalytic residue. Residues His433 and Asp505 each contribute to the Zn(2+) site. Residues 658-854 (AGAPNSGVPN…ARWDGPDGSR (197 aa)) are disordered. 2 stretches are compositionally biased toward low complexity: residues 661-692 (PNSG…AQPS) and 698-719 (APQQ…WSAP). Over residues 720-730 (GWPPRENPSPT) the composition is skewed to pro residues. Low complexity predominate over residues 749 to 778 (NQSQGQYGQPQHGQPQPDQGQYGQPHPGQQ). A compositionally biased stretch (polar residues) spans 812–822 (GNPSGENQWQS). The span at 825–834 (PEQPQTPPPH) shows a compositional bias: pro residues.

In the central section; belongs to the AAA ATPase family. It in the C-terminal section; belongs to the peptidase M41 family. As to quaternary structure, homohexamer. Zn(2+) serves as cofactor.

It localises to the cell membrane. Its function is as follows. Acts as a processive, ATP-dependent zinc metallopeptidase for both cytoplasmic and membrane proteins. Plays a role in the quality control of integral membrane proteins. This chain is ATP-dependent zinc metalloprotease FtsH, found in Rhodococcus erythropolis (strain PR4 / NBRC 100887).